A 300-amino-acid polypeptide reads, in one-letter code: Sulfate adenylyltransferase subunit 2 (300 aa).

Residues 281–300 (RAIDRDEAGSMEKKKREGYF) are disordered.

This sequence belongs to the PAPS reductase family. CysD subfamily. Heterodimer composed of CysD, the smaller subunit, and CysN.

It catalyses the reaction sulfate + ATP + H(+) = adenosine 5'-phosphosulfate + diphosphate. It functions in the pathway sulfur metabolism; hydrogen sulfide biosynthesis; sulfite from sulfate: step 1/3. Its function is as follows. With CysN forms the ATP sulfurylase (ATPS) that catalyzes the adenylation of sulfate producing adenosine 5'-phosphosulfate (APS) and diphosphate, the first enzymatic step in sulfur assimilation pathway. APS synthesis involves the formation of a high-energy phosphoric-sulfuric acid anhydride bond driven by GTP hydrolysis by CysN coupled to ATP hydrolysis by CysD. The protein is Sulfate adenylyltransferase subunit 2 of Brucella melitensis biotype 2 (strain ATCC 23457).